Here is a 197-residue protein sequence, read N- to C-terminus: Small ribosomal subunit protein uS4B (197 aa).

The S4 RNA-binding domain maps to 88–153; the sequence is CRLDNMVYRM…IEKYLSNLKN (66 aa).

It belongs to the universal ribosomal protein uS4 family. Part of the 30S ribosomal subunit. Contacts protein S5. The interaction surface between S4 and S5 is involved in control of translational fidelity.

Its function is as follows. One of the primary rRNA binding proteins, it binds directly to 16S rRNA where it nucleates assembly of the body of the 30S subunit. With S5 and S12 plays an important role in translational accuracy. This chain is Small ribosomal subunit protein uS4B, found in Alkaliphilus oremlandii (strain OhILAs) (Clostridium oremlandii (strain OhILAs)).